Reading from the N-terminus, the 678-residue chain is THO complex subunit 5 homolog A (678 aa).

Disordered stretches follow at residues 1–35 and 294–329; these read MASD…YSEE and ALFK…VQLD. Positions 7–10 match the Nuclear localization signal motif; it reads KKRK. Positions 14–35 are enriched in basic and acidic residues; it reads NRNEDVKRGRHEDQEGRYYSEE. Positions 301-314 are enriched in acidic residues; that stretch reads DSQDDESDSDAEEE.

The protein belongs to the THOC5 family. Component of the THO subcomplex, which is composed of thoc1, thoc2, thoc3, thoc5, thoc6 and thoc7. Component of the transcription/export (TREX) complex at least composed of alyref/thoc4, ddx39b, sarnp/cip29, chtop and the THO subcomplex. Interacts with thoc7.

The protein resides in the nucleus. It is found in the nucleus speckle. Its subcellular location is the cytoplasm. In terms of biological role, component of the THO subcomplex of the TREX complex which is thought to couple mRNA transcription, processing and nuclear export, and which specifically associates with spliced mRNA and not with unspliced pre-mRNA. Plays a key structural role in the oligomerization of the THO-ddx39b complex. TREX is recruited to spliced mRNAs by a transcription-independent mechanism, binds to mRNA upstream of the exon-junction complex (EJC) and is recruited in a splicing- and cap-dependent manner to a region near the 5' end of the mRNA where it functions in mRNA export to the cytoplasm via the TAP/NXF1 pathway. May be involved in cell differentiation. This Xenopus laevis (African clawed frog) protein is THO complex subunit 5 homolog A (thoc5-a).